Reading from the N-terminus, the 207-residue chain is Segregation and condensation protein B (207 aa).

Belongs to the ScpB family. Homodimer. Homodimerization may be required to stabilize the binding of ScpA to the Smc head domains. Component of a cohesin-like complex composed of ScpA, ScpB and the Smc homodimer, in which ScpA and ScpB bind to the head domain of Smc. The presence of the three proteins is required for the association of the complex with DNA.

It localises to the cytoplasm. Its function is as follows. Participates in chromosomal partition during cell division. May act via the formation of a condensin-like complex containing Smc and ScpA that pull DNA away from mid-cell into both cell halves. The polypeptide is Segregation and condensation protein B (Mycoplasmopsis pulmonis (strain UAB CTIP) (Mycoplasma pulmonis)).